The following is a 227-amino-acid chain: Glial cell line-derived neurotrophic factor (227 aa).

The N-terminal stretch at 1-19 (MKLWAILAVCILLLSSVSS) is a signal peptide. The propeptide occupies 20–93 (IPLPSNWLAG…EFIQDTIKRL (74 aa)). 2 disordered regions span residues 32-61 (RSHLPDPQEGEDQVFGMDGAVPEDPTANMA) and 93-113 (LKRSSNKQPPSRRDRGRQSLA). Intrachain disulfides connect Cys-134–Cys-195, Cys-161–Cys-224, and Cys-165–Cys-226. Residues Asn-142 and Asn-178 are each glycosylated (N-linked (GlcNAc...) asparagine).

The protein belongs to the TGF-beta family. GDNF subfamily. In terms of assembly, homodimer; disulfide-linked. Interacts with GFRA1 coreceptor and RET: forms a 2:2:2 ternary complex composed of GDNF ligand, GFRA1 and RET receptor. From stage 22, expressed in somites and the pronephros. At stage 24 and 26, expressed in the pharyngeal arches I-III. At stage 31, expression in the eye, central nervous system and pharyngeal arches IV and V increases. Up to stage 34, expression becomes intense at the oral cavity and lateral line structures. At this stage, expression weakens in the pharyngeal arches, and increases in the epibranchial arches. Expressed in the digestive tract in stage 34 embryos.

It localises to the secreted. In terms of biological role, neurotrophic factor that enhances survival and morphological differentiation of dopaminergic neurons and increases their high-affinity dopamine uptake. Acts by binding to its coreceptor, GFRA1, leading to autophosphorylation and activation of the RET receptor. This Xenopus laevis (African clawed frog) protein is Glial cell line-derived neurotrophic factor.